An 868-amino-acid polypeptide reads, in one-letter code: Translation initiation factor IF-2 (868 aa).

Basic and acidic residues predominate over residues 103 to 183 (RSELPETSDR…RQAAAERETV (81 aa)). Positions 103 to 274 (RSELPETSDR…GRPMLMPEQK (172 aa)) are disordered. The segment covering 190–207 (VAAPPIPRPAPEPRPPAR) has biased composition (pro residues). Basic and acidic residues predominate over residues 213-254 (PKAEAPRAHPAERETEARGDKRSAGLSRKDEYRELQGDDFRK). Basic residues predominate over residues 255 to 264 (GGGKRKKPKT). In terms of domain architecture, tr-type G spans 369 to 538 (PRPPVVTIMG…LVQAEVLELK (170 aa)). The interval 378–385 (GHVDHGKT) is G1. Position 378–385 (378–385 (GHVDHGKT)) interacts with GTP. Positions 403–407 (GITQH) are G2. The segment at 424–427 (DTPG) is G3. GTP-binding positions include 424-428 (DTPGH) and 478-481 (NKMD). The interval 478-481 (NKMD) is G4. The segment at 514–516 (SAK) is G5.

Belongs to the TRAFAC class translation factor GTPase superfamily. Classic translation factor GTPase family. IF-2 subfamily.

It is found in the cytoplasm. One of the essential components for the initiation of protein synthesis. Protects formylmethionyl-tRNA from spontaneous hydrolysis and promotes its binding to the 30S ribosomal subunits. Also involved in the hydrolysis of GTP during the formation of the 70S ribosomal complex. In Methylococcus capsulatus (strain ATCC 33009 / NCIMB 11132 / Bath), this protein is Translation initiation factor IF-2.